A 91-amino-acid chain; its full sequence is Small ribosomal subunit protein bS16 (91 aa).

Belongs to the bacterial ribosomal protein bS16 family.

This Limosilactobacillus reuteri (strain DSM 20016) (Lactobacillus reuteri) protein is Small ribosomal subunit protein bS16.